Here is a 413-residue protein sequence, read N- to C-terminus: Large ribosomal subunit protein uL4 (413 aa).

A2 is subject to N-acetylalanine. K14 carries the post-translational modification N6-acetyllysine. At R97 the chain carries Omega-N-methylarginine. An N6-acetyllysine modification is found at K106. A Glycyl lysine isopeptide (Lys-Gly) (interchain with G-Cter in SUMO2) cross-link involves residue K239. At K259 the chain carries N6-acetyllysine. T266 carries the phosphothreonine modification. A phosphoserine mark is found at S290 and S295. R300 bears the Citrulline mark. Residue K327 forms a Glycyl lysine isopeptide (Lys-Gly) (interchain with G-Cter in SUMO2) linkage. An N6-acetyllysine modification is found at K333. The disordered stretch occupies residues 355 to 413 (AAALAAKSDPKEAPAKKKPVVGKKKKPVVGRKAAAAKKPAADKKAADKRAGPEDKKPAA). K361 carries the post-translational modification N6-acetyllysine; alternate. K361 is covalently cross-linked (Glycyl lysine isopeptide (Lys-Gly) (interchain with G-Cter in SUMO1); alternate). Phosphoserine is present on S362. A compositionally biased stretch (basic residues) spans 370-383 (KKKPVVGKKKKPVV). Positions 393-413 (PAADKKAADKRAGPEDKKPAA) are enriched in basic and acidic residues.

Belongs to the universal ribosomal protein uL4 family. Component of the large ribosomal subunit. May bind IPO9 with low affinity. Interacts with RBM3. In terms of processing, citrullinated by PADI4.

Its subcellular location is the cytoplasm. Component of the large ribosomal subunit. The ribosome is a large ribonucleoprotein complex responsible for the synthesis of proteins in the cell. The sequence is that of Large ribosomal subunit protein uL4 (RPL4) from Oryctolagus cuniculus (Rabbit).